A 107-amino-acid polypeptide reads, in one-letter code: UPF0122 protein STH1464 (107 aa).

Belongs to the UPF0122 family.

In terms of biological role, might take part in the signal recognition particle (SRP) pathway. This is inferred from the conservation of its genetic proximity to ftsY/ffh. May be a regulatory protein. The sequence is that of UPF0122 protein STH1464 from Symbiobacterium thermophilum (strain DSM 24528 / JCM 14929 / IAM 14863 / T).